Consider the following 481-residue polypeptide: Alpha-ketoglutaric semialdehyde dehydrogenase 1 (481 aa).

NADP(+)-binding positions include 154–155 (WN), 178–181 (KAPE), and 231–232 (GS). Catalysis depends on glutamate 253, which acts as the Proton acceptor. An NADP(+)-binding site is contributed by leucine 254. Catalysis depends on cysteine 287, which acts as the Nucleophile. Glutamate 384 lines the NADP(+) pocket.

This sequence belongs to the aldehyde dehydrogenase family. As to quaternary structure, homotetramer.

It catalyses the reaction 2,5-dioxopentanoate + NADP(+) + H2O = 2-oxoglutarate + NADPH + 2 H(+). The catalysed reaction is 2,5-dioxopentanoate + NAD(+) + H2O = 2-oxoglutarate + NADH + 2 H(+). It carries out the reaction succinate semialdehyde + NAD(+) + H2O = succinate + NADH + 2 H(+). Its function is as follows. Catalyzes the NAD(P)(+)-dependent oxidation of alpha-ketoglutaric semialdehyde (alphaKGSA) to alpha-ketoglutarate. Is involved in a degradation pathway of L-arabinose that allows A.brasilense to grow on L-arabinose as a sole carbon source. Prefers NAD(+) to NADP(+) as a cosubstrate. Displays broad substrate specificity: exhibits the highest activity with alphaKGSA and succinic semialdehyde as substrates, but to a lesser extent, is also active with glutaraldehyde, benzaldehyde, and a number of aldehydes from C3 to C8. This Azospirillum brasilense protein is Alpha-ketoglutaric semialdehyde dehydrogenase 1 (araE).